Here is a 353-residue protein sequence, read N- to C-terminus: Photosystem II D2 protein (353 aa).

N-acetylthreonine is present on Thr2. Position 2 is a phosphothreonine (Thr2). A helical transmembrane segment spans residues 41-61 (CAYFALGGWFTGTTFVTSWYT). His118 contacts chlorophyll a. A helical membrane pass occupies residues 125–141 (GFMLRQFELARSVQLRP). Pheophytin a contacts are provided by Gln130 and Asn143. The chain crosses the membrane as a helical span at residues 153–166 (VFVSVFLIYPLGQS). His198 contributes to the chlorophyll a binding site. Residues 208-228 (AALLCAIHGATVENTLFEDGD) traverse the membrane as a helical segment. Residues His215 and Phe262 each contribute to the a plastoquinone site. Fe cation is bound at residue His215. His269 provides a ligand contact to Fe cation. Residues 279-295 (GLWMSALGVVGLALNLR) form a helical membrane-spanning segment.

This sequence belongs to the reaction center PufL/M/PsbA/D family. PSII is composed of 1 copy each of membrane proteins PsbA, PsbB, PsbC, PsbD, PsbE, PsbF, PsbH, PsbI, PsbJ, PsbK, PsbL, PsbM, PsbT, PsbX, PsbY, PsbZ, Psb30/Ycf12, at least 3 peripheral proteins of the oxygen-evolving complex and a large number of cofactors. It forms dimeric complexes. The D1/D2 heterodimer binds P680, chlorophylls that are the primary electron donor of PSII, and subsequent electron acceptors. It shares a non-heme iron and each subunit binds pheophytin, quinone, additional chlorophylls, carotenoids and lipids. There is also a Cl(-1) ion associated with D1 and D2, which is required for oxygen evolution. The PSII complex binds additional chlorophylls, carotenoids and specific lipids. serves as cofactor.

It is found in the plastid. The protein resides in the chloroplast thylakoid membrane. It carries out the reaction 2 a plastoquinone + 4 hnu + 2 H2O = 2 a plastoquinol + O2. In terms of biological role, photosystem II (PSII) is a light-driven water:plastoquinone oxidoreductase that uses light energy to abstract electrons from H(2)O, generating O(2) and a proton gradient subsequently used for ATP formation. It consists of a core antenna complex that captures photons, and an electron transfer chain that converts photonic excitation into a charge separation. The D1/D2 (PsbA/PsbD) reaction center heterodimer binds P680, the primary electron donor of PSII as well as several subsequent electron acceptors. D2 is needed for assembly of a stable PSII complex. The polypeptide is Photosystem II D2 protein (Ceratophyllum demersum (Rigid hornwort)).